Here is a 207-residue protein sequence, read N- to C-terminus: Thymidylate kinase (207 aa).

An ATP-binding site is contributed by 12 to 19; that stretch reads GVDGAGKS.

This sequence belongs to the thymidylate kinase family.

It catalyses the reaction dTMP + ATP = dTDP + ADP. Functionally, phosphorylation of dTMP to form dTDP in both de novo and salvage pathways of dTTP synthesis. The chain is Thymidylate kinase from Bordetella petrii (strain ATCC BAA-461 / DSM 12804 / CCUG 43448).